The chain runs to 363 residues: 3-isopropylmalate dehydrogenase (363 aa).

78–91 is an NAD(+) binding site; that stretch reads GPKWEHLPPDQQPE. Substrate is bound by residues arginine 99, arginine 109, arginine 138, and aspartate 227. Mg(2+)-binding residues include aspartate 227, aspartate 251, and aspartate 255. Position 285 to 297 (285 to 297) interacts with NAD(+); sequence GSAPDIAGKNIAN.

It belongs to the isocitrate and isopropylmalate dehydrogenases family. LeuB type 1 subfamily. Homodimer. The cofactor is Mg(2+). It depends on Mn(2+) as a cofactor.

It is found in the cytoplasm. The catalysed reaction is (2R,3S)-3-isopropylmalate + NAD(+) = 4-methyl-2-oxopentanoate + CO2 + NADH. The protein operates within amino-acid biosynthesis; L-leucine biosynthesis; L-leucine from 3-methyl-2-oxobutanoate: step 3/4. Catalyzes the oxidation of 3-carboxy-2-hydroxy-4-methylpentanoate (3-isopropylmalate) to 3-carboxy-4-methyl-2-oxopentanoate. The product decarboxylates to 4-methyl-2 oxopentanoate. The chain is 3-isopropylmalate dehydrogenase from Escherichia coli O157:H7.